Reading from the N-terminus, the 234-residue chain is Leucyl/phenylalanyl-tRNA--protein transferase (234 aa).

The protein belongs to the L/F-transferase family.

It is found in the cytoplasm. The catalysed reaction is N-terminal L-lysyl-[protein] + L-leucyl-tRNA(Leu) = N-terminal L-leucyl-L-lysyl-[protein] + tRNA(Leu) + H(+). It catalyses the reaction N-terminal L-arginyl-[protein] + L-leucyl-tRNA(Leu) = N-terminal L-leucyl-L-arginyl-[protein] + tRNA(Leu) + H(+). The enzyme catalyses L-phenylalanyl-tRNA(Phe) + an N-terminal L-alpha-aminoacyl-[protein] = an N-terminal L-phenylalanyl-L-alpha-aminoacyl-[protein] + tRNA(Phe). Functions in the N-end rule pathway of protein degradation where it conjugates Leu, Phe and, less efficiently, Met from aminoacyl-tRNAs to the N-termini of proteins containing an N-terminal arginine or lysine. The polypeptide is Leucyl/phenylalanyl-tRNA--protein transferase (Escherichia fergusonii (strain ATCC 35469 / DSM 13698 / CCUG 18766 / IAM 14443 / JCM 21226 / LMG 7866 / NBRC 102419 / NCTC 12128 / CDC 0568-73)).